Consider the following 135-residue polypeptide: T-cell receptor gamma chain V region 5/10-13 (135 aa).

An N-terminal signal peptide occupies residues 1–18 (MLLLRWPTFCCLWVFGLG). The tract at residues 19 to 114 (QLEQTELSVT…DEATYYCAVC (96 aa)) is v segment. The interval 115 to 135 (RSGTSWVKIFAKGTKLVVIPP) is j segment.

This is T-cell receptor gamma chain V region 5/10-13 (Tcrg-V1) from Mus musculus (Mouse).